Here is a 1143-residue protein sequence, read N- to C-terminus: Disease resistance protein Pik-1 (1143 aa).

A structured coiled coil (CC) domain region spans residues 1 to 190; that stretch reads MEAAAMAVTA…PLRIMGGEMQ (190 aa). Residues 189-258 form the HMA domain; sequence MQKIVFKIPM…KVGHAELLQV (70 aa). The HMA-like domain stretch occupies residues 191–264; the sequence is KIVFKIPMVD…LLQVSQVKED (74 aa). An NB-ARC domain is found at 282 to 570; the sequence is HEVKTICILG…WIAEGFVSEE (289 aa). LRR repeat units lie at residues 681-706, 708-731, 732-754, 756-777, 778-800, 802-823, 824-848, 945-968, 979-1002, and 1004-1027; these read FKRLRVLDLEDNKDIQDSHLQGICEQ, SLRVRYLGLKGTRIRKLPQEMRKL, KHLEILYVGSTRISELPQEIGEL, HLRILDVRNTDITELPLQIREL, QHLHTLDVRNTPISELPPQVGKL, NLKIMCVRSTGVRELPKEIGEL, NHLQTLDVRNTRVRELPWQAGQISQ, MPNLQTLVLRFEALPRQPITINGT, DSRLPRIAFHEDAMPNLKLLEFKF, and AGPASNDAIGITNLKSLQKVVFRC.

It belongs to the disease resistance NB-LRR family. As to quaternary structure, interacts with AVR-Pik through its N-terminal part containing the HMA-like domain.

Its function is as follows. Disease resistance (R) protein that specifically recognizes the AVR-Pik effector avirulence protein from M.oryzae. Resistance proteins guard the plant against pathogens that contain an appropriate avirulence protein via an indirect interaction with this avirulence protein. That triggers a defense system including the hypersensitive response, which restricts the pathogen growth. Contribution of Pik-2 is required to recognize the effector avirulence protein AVR-Pik. This Oryza sativa subsp. japonica (Rice) protein is Disease resistance protein Pik-1.